A 205-amino-acid polypeptide reads, in one-letter code: Methyltransferase-like 26 B (205 aa).

This sequence belongs to the UPF0585 family.

This is Methyltransferase-like 26 B from Danio rerio (Zebrafish).